Here is a 493-residue protein sequence, read N- to C-terminus: ATP synthase subunit beta, chloroplastic (493 aa).

170–177 contributes to the ATP binding site; the sequence is GGAGVGKT.

The protein belongs to the ATPase alpha/beta chains family. As to quaternary structure, F-type ATPases have 2 components, CF(1) - the catalytic core - and CF(0) - the membrane proton channel. CF(1) has five subunits: alpha(3), beta(3), gamma(1), delta(1), epsilon(1). CF(0) has four main subunits: a(1), b(1), b'(1) and c(9-12).

It localises to the plastid. It is found in the chloroplast thylakoid membrane. The catalysed reaction is ATP + H2O + 4 H(+)(in) = ADP + phosphate + 5 H(+)(out). Produces ATP from ADP in the presence of a proton gradient across the membrane. The catalytic sites are hosted primarily by the beta subunits. This Adiantum capillus-veneris (Maidenhair fern) protein is ATP synthase subunit beta, chloroplastic.